The chain runs to 119 residues: Holo-[acyl-carrier-protein] synthase (119 aa).

Residues aspartate 8 and glutamate 58 each contribute to the Mg(2+) site.

It belongs to the P-Pant transferase superfamily. AcpS family. It depends on Mg(2+) as a cofactor.

It localises to the cytoplasm. The catalysed reaction is apo-[ACP] + CoA = holo-[ACP] + adenosine 3',5'-bisphosphate + H(+). Its function is as follows. Transfers the 4'-phosphopantetheine moiety from coenzyme A to a Ser of acyl-carrier-protein. The chain is Holo-[acyl-carrier-protein] synthase from Geobacillus sp. (strain WCH70).